The chain runs to 355 residues: WD repeat domain phosphoinositide-interacting protein 4 (355 aa).

WD repeat units lie at residues 2–40 (SQQR…EKGH) and 185–225 (AHQS…QLVE). The L/FRRG motif motif lies at 226–229 (LRRG). One copy of the WD 3 repeat lies at 230-269 (TDPATLYCINFSHDSSFLCSSSDKGTVHIFALKDTKLNRR).

The protein belongs to the WD repeat PROPPIN family.

The protein localises to the preautophagosomal structure. In terms of biological role, component of the autophagy machinery that controls the major intracellular degradation process by which cytoplasmic materials are packaged into autophagosomes and delivered to lysosomes for degradation. Binds phosphatidylinositol 3-phosphate (PtdIns3P). This is WD repeat domain phosphoinositide-interacting protein 4 (wdr45) from Xenopus laevis (African clawed frog).